The primary structure comprises 897 residues: MASAVPAQVQSSQASAPQLQRGIVKMVLSGCAIIVRGQPRGGPPPERQINLSNIRAGALARRAIQGQPDTKDTPDEPWAFQAREFMRKKVIGKEVCFTVENKTPQGREYGMVYLGKDTSGENIAESLVAEGLAMVRREGIRGNNPEQVRLCDLEDQAKSSKKGLWSEGGGSHTIRDLKYTIENPRNFVDSLHQKPVNAIIEHVRDGCMVRALLLPDYYLVTVMLSGIKSPTFKREADGSETPEPFAAEAKFFTESRLLQRDVQIILESCPNQVILGTILHPNGNITELLLKEGFARCVDWSMAVYTQGAEKLRAAERSAKERKVRIWKDYVAPTANLDQKDRQFVAKVMQVVNADAIVVKLNSGEYKTIHLSSIRPPRLEGEEKNKDKDKRFRPLYDIPYMFEAREFLRKKLIGKKVNVTVDYIRAATNAMEMGVPAFPERTCATVTIGGINIAEALVSKGLATVIRYRQDDDQRSSHYDELLAAEARAIKNGKGLHSKKEVPIHRVADISGETQKAKQFFPFLQRAGRSEAVVEYVFSGSRLKLYMPKETCLITFLLAGIECPRGSRNMPGGMQVAEPYSEEAMLFTKELVLQREVEVEVESMDIAGNFIDWLHIDGVNLSVALVENALSKVHFTAERSSYYKTLVSAEESARQRKEKLWANYEEKPNEEVAQVTEAKERGRNTDPSTSLEITDGLHFYAQDVETGTKLENLMESMRGEIAAQPPVEGSFAPRRGEFCIAKFADGEWYRARVEKVESPAKVHVFYIDYGNREVLSSTRLAALPPAFSTRTLPPQATEYAFAYIQVPQDEDARADAVDSVVRDIHNTQCLLNVEYSGMVCPQVTLQFADTKEDVGLGLVKEGMVMVDIRKEKYLQKMVTEYLNAQESAKSARLNIWR.

TNase-like domains follow at residues 18-167, 194-329, 342-499, and 528-663; these read QLQR…LWSE, KPVN…IWKD, RQFV…LHSK, and GRSE…LWAN. The region spanning 732–790 is the Tudor domain; it reads APRRGEFCIAKFADGEWYRARVEKVESPAKVHVFYIDYGNREVLSSTRLAALPPAFSTR.

The protein localises to the cytoplasm. The protein is Staphylococcal nuclease domain-containing protein 1 (snd1) of Danio rerio (Zebrafish).